The chain runs to 613 residues: MGKEKKTESYNNDSGSYNYRMFKFYNRKFKINEVTPTDDVRDAFCQFAVGGGGGGTDGDSSDGDGSTGVMGAEQLCSFLDDHGESTTVAEAQRLIDEVIRRRHHVTRFTRHGLDLDDFFNFLFYDDLNPPITPHVHQDMTAPLSHYFIYTGHNSYLTGNQLSSDCSEVPVIKALQRGVRVIELDLWPNSTGTDINVLHGRTLTTPVPLMKCLKSIRDYAFSSSPYPVIITLEDHLTPDLQAKVAEMATQIFGQMLYYPESDSLLEFPSPASLLHRIIISTKPPKEYLESRNPIVKQKDNNVSPSSEDETPRTEEIQTLESMLFDQDFESKSDSDQEDEEASEDQKPAYKRLITIHAGKPKGTVKEEMKVVVDKVRRLSLSEQELDRTCSSNSQDVVRFTQRNLLRIYPKGTRFNSSNYKPLIGWTHGAQMIAFNMQGYGKSLWLMHGMFRANGGCGYVKKPNFLMKKGFHDEVFDPRKKLPVKETLKVKVYMGDGWRMDFSHTHFDAYSPPDFYTKMFIVGVPADNAKKKTKIIEDNWYPIWDEEFSFPLTVPELALLRIEVREYDMSEKDDFGGQTCLPVAELRPGIRSVPLYDKKGEKMKSVRLLMRFIFE.

One can recognise a PI-PLC X-box domain in the interval 137 to 281 (QDMTAPLSHY…LLHRIIISTK (145 aa)). Active-site residues include His-152 and His-198. The tract at residues 288-349 (ESRNPIVKQK…ASEDQKPAYK (62 aa)) is disordered. The 117-residue stretch at 349–465 (KRLITIHAGK…GYVKKPNFLM (117 aa)) folds into the PI-PLC Y-box domain. The C2 domain occupies 466 to 595 (KKGFHDEVFD…PGIRSVPLYD (130 aa)).

The cofactor is Ca(2+). In terms of tissue distribution, expressed in leaves, flowers and siliques, but not in roots.

It localises to the cell membrane. It catalyses the reaction a 1,2-diacyl-sn-glycero-3-phospho-(1D-myo-inositol-4,5-bisphosphate) + H2O = 1D-myo-inositol 1,4,5-trisphosphate + a 1,2-diacyl-sn-glycerol + H(+). Its function is as follows. The production of the second messenger molecules diacylglycerol (DAG) and inositol 1,4,5-trisphosphate (IP3) is mediated by activated phosphatidylinositol-specific phospholipase C enzymes. The sequence is that of Phosphoinositide phospholipase C 6 (PLC6) from Arabidopsis thaliana (Mouse-ear cress).